The sequence spans 451 residues: Gamma-aminobutyric acid receptor subunit alpha-2 (451 aa).

Positions 1 to 28 (MKTKLNIYNMQLLLFVFLVWDPARLVLA) are cleaved as a signal peptide. The Extracellular segment spans residues 29 to 249 (NIQEDEAKNN…MTAHFHLKRK (221 aa)). N-linked (GlcNAc...) asparagine glycosylation occurs at Asn-38. Position 94 (Arg-94) interacts with 4-aminobutanoate. Asn-138 is a glycosylation site (N-linked (GlcNAc...) asparagine). Thr-157 serves as a coordination point for 4-aminobutanoate. An intrachain disulfide couples Cys-166 to Cys-180. The chain crosses the membrane as a helical span at residues 250-270 (IGYFVIQTYLPCIMTVILSQV). The Cytoplasmic segment spans residues 271–280 (SFWLNRESVP). A helical membrane pass occupies residues 281–300 (ARTVFGVTTVLTMTTLSISA). At 301–311 (RNSLPKVAYAT) the chain is on the extracellular side. Residues 312-332 (AMDWFIAVCYAFVFSALIEFA) traverse the membrane as a helical segment. Residues 333-420 (TVNYFTKRGW…FNSVSKIDRM (88 aa)) lie on the Cytoplasmic side of the membrane. A helical transmembrane segment spans residues 421–441 (SRIVFPVLFGTFNLVYWATYL). Residues 442–451 (NREPVLGVSP) lie on the Extracellular side of the membrane.

The protein belongs to the ligand-gated ion channel (TC 1.A.9) family. Gamma-aminobutyric acid receptor (TC 1.A.9.5) subfamily. GABRA2 sub-subfamily. As to quaternary structure, heteropentamer, formed by a combination of alpha (GABRA1-6), beta (GABRB1-3), gamma (GABRG1-3), delta (GABRD), epsilon (GABRE), rho (GABRR1-3), pi (GABRP) and theta (GABRQ) subunits, each subunit exhibiting distinct physiological and pharmacological properties. Interacts with UBQLN1. Interacts with KIF21B. Interacts with LHFPL4. Interacts with SHISA7; interaction leads to the regulation of GABA(A) receptor trafficking, channel deactivation kinetics and pharmacology. In terms of processing, glycosylated.

It is found in the postsynaptic cell membrane. The protein localises to the cell membrane. Its subcellular location is the cytoplasmic vesicle membrane. It localises to the cell projection. The protein resides in the dendrite. The catalysed reaction is chloride(in) = chloride(out). Its activity is regulated as follows. Activated by pentobarbital. Inhibited by the antagonist bicuculline. Alpha subunit of the heteropentameric ligand-gated chloride channel gated by gamma-aminobutyric acid (GABA), a major inhibitory neurotransmitter in the brain. GABA-gated chloride channels, also named GABA(A) receptors (GABAAR), consist of five subunits arranged around a central pore and contain GABA active binding site(s) located at the alpha and beta subunit interface(s). When activated by GABA, GABAARs selectively allow the flow of chloride anions across the cell membrane down their electrochemical gradient. Chloride influx into the postsynaptic neuron following GABAAR opening decreases the neuron ability to generate a new action potential, thereby reducing nerve transmission. The alpha-2 subunit exhibits synaptogenic activity together with beta-2 and very little to no activity together with beta-3, the gamma-2 subunit being necessary but not sufficient to induce rapid synaptic contacts formation. In Pongo abelii (Sumatran orangutan), this protein is Gamma-aminobutyric acid receptor subunit alpha-2 (GABRA2).